Consider the following 253-residue polypeptide: Peptidase inhibitor R3HDML (253 aa).

Positions 1 to 23 (MPLLSSIVGLTGLLLWMGHTVGA) are cleaved as a signal peptide. A propeptide spanning residues 24-56 (LRMPNTTLVQGRPKNTAVWPLSGLGVPRHRRKR) is cleaved from the precursor. N-linked (GlcNAc...) asparagine glycosylation is found at Asn28 and Asn120. One can recognise an SCP domain in the interval 67-207 (LDYHNHIRAS…QQAVYLVCNY (141 aa)).

This sequence belongs to the CRISP family.

Its subcellular location is the secreted. In terms of biological role, putative serine protease inhibitor. The sequence is that of Peptidase inhibitor R3HDML (R3hdml) from Mus musculus (Mouse).